Reading from the N-terminus, the 976-residue chain is Probable basic-leucine zipper transcription factor Q (976 aa).

Coiled coils occupy residues 57–110 and 136–287; these read AIDS…QYQQ and QQQQ…QQQQ. Residues 104–128 are disordered; that stretch reads YQQQYQQPYTTPSPPDQIDYNQQLS. 2 stretches are compositionally biased toward polar residues: residues 374 to 385 and 393 to 411; these read TNFNGTNNSTPN and KLSS…SPPS. Residues 374–499 are disordered; it reads TNFNGTNNST…PIDSNGDFDL (126 aa). Composition is skewed to low complexity over residues 420-468 and 476-490; these read PKNN…FNNN and STTT…MTSP. The region spanning 504 to 567 is the bZIP domain; that stretch reads EKKKSISRIN…GVEVMRPEPE (64 aa). The interval 505–507 is basic motif; it reads KKK. The tract at residues 509 to 516 is leucine-zipper; that stretch reads ISRINQNL. The segment covering 855-938 has biased composition (low complexity); the sequence is ENQSNNFGNN…VNSNNNNFNN (84 aa). The interval 855–957 is disordered; the sequence is ENQSNNFGNN…SADAIPYPST (103 aa).

It belongs to the bZIP family.

The protein resides in the nucleus. Functionally, probable transcriptional regulator. This Dictyostelium discoideum (Social amoeba) protein is Probable basic-leucine zipper transcription factor Q (bzpQ).